A 210-amino-acid polypeptide reads, in one-letter code: Large ribosomal subunit protein uL4 (210 aa).

The segment at 46–96 is disordered; sequence QGNASTKTRAEVRGGGRKPWRQKGTGRARAGSNRSPLWRGGGVIFGPKPRD. Residues 60–71 are compositionally biased toward basic residues; the sequence is GGRKPWRQKGTG.

The protein belongs to the universal ribosomal protein uL4 family. Part of the 50S ribosomal subunit.

One of the primary rRNA binding proteins, this protein initially binds near the 5'-end of the 23S rRNA. It is important during the early stages of 50S assembly. It makes multiple contacts with different domains of the 23S rRNA in the assembled 50S subunit and ribosome. In terms of biological role, forms part of the polypeptide exit tunnel. The polypeptide is Large ribosomal subunit protein uL4 (Gloeothece citriformis (strain PCC 7424) (Cyanothece sp. (strain PCC 7424))).